The following is a 766-amino-acid chain: Serine/threonine-protein kinase PKH1 (766 aa).

The interval methionine 1–glutamine 52 is disordered. Polar residues predominate over residues glycine 38–glutamine 52. One can recognise a Protein kinase domain in the interval phenylalanine 125–phenylalanine 391. Residues serine 135 to serine 137 and lysine 154 each bind ATP. Residues leucine 156–phenylalanine 201 form a PIF-pocket region. ATP is bound by residues glutamate 204 to alanine 206 and aspartate 210. Aspartate 249 acts as the Proton acceptor in catalysis. Positions 253 and 267 each coordinate ATP. Phosphoserine is present on residues serine 294 and serine 296. Polar residues predominate over residues threonine 476–asparagine 495. Disordered regions lie at residues threonine 476 to arginine 529 and proline 725 to asparagine 745. Positions serine 511–serine 521 are enriched in low complexity. Residues proline 735–asparagine 745 show a composition bias toward polar residues.

Belongs to the protein kinase superfamily. AGC Ser/Thr protein kinase family. PDPK1 subfamily.

The enzyme catalyses L-seryl-[protein] + ATP = O-phospho-L-seryl-[protein] + ADP + H(+). It carries out the reaction L-threonyl-[protein] + ATP = O-phospho-L-threonyl-[protein] + ADP + H(+). Its function is as follows. Activates YPK1 by phosphorylating of a threonine residue. The sequence is that of Serine/threonine-protein kinase PKH1 (PKH1) from Saccharomyces cerevisiae (strain ATCC 204508 / S288c) (Baker's yeast).